The following is a 213-amino-acid chain: Probable transaldolase (213 aa).

Catalysis depends on Lys83, which acts as the Schiff-base intermediate with substrate.

The protein belongs to the transaldolase family. Type 3B subfamily.

The protein localises to the cytoplasm. The enzyme catalyses D-sedoheptulose 7-phosphate + D-glyceraldehyde 3-phosphate = D-erythrose 4-phosphate + beta-D-fructose 6-phosphate. It participates in carbohydrate degradation; pentose phosphate pathway; D-glyceraldehyde 3-phosphate and beta-D-fructose 6-phosphate from D-ribose 5-phosphate and D-xylulose 5-phosphate (non-oxidative stage): step 2/3. Transaldolase is important for the balance of metabolites in the pentose-phosphate pathway. This is Probable transaldolase from Geobacillus thermodenitrificans (strain NG80-2).